The sequence spans 92 residues: Protein S100-B (92 aa).

At S2 the chain carries N-acetylserine. 2 EF-hand domains span residues 13 to 48 (DVFH…LEEI) and 49 to 84 (KEQE…VTTA). H16 provides a ligand contact to Zn(2+). The Ca(2+) site is built by S19, E22, and D24. H26 is a binding site for Zn(2+). Residues D62, D64, D66, E68, and E73 each coordinate Ca(2+). H86 and H91 together coordinate Zn(2+).

This sequence belongs to the S-100 family. As to quaternary structure, dimer of either two alpha chains, or two beta chains, or one alpha and one beta chain. The S100B dimer binds two molecules of STK38. Interacts with CACYBP in a calcium-dependent manner. Interacts with ATAD3A; this interaction probably occurs in the cytosol prior to ATAD3A mitochondrial targeting. Interacts with S100A6. The S100B dimer interacts with two molecules of CAPZA1. Interacts with AGER. Interacts with PPP5C (via TPR repeats); the interaction is calcium-dependent and modulates PPP5C activity. Interacts with TPPP; this interaction inhibits TPPP dimerization. Interacts with isoform CLSTN3beta of CLSTN3; interaction promotes secretion.

It is found in the cytoplasm. The protein resides in the nucleus. It localises to the secreted. Small zinc- and- and calcium-binding protein that is highly expressed in astrocytes and constitutes one of the most abundant soluble proteins in brain. Weakly binds calcium but binds zinc very tightly-distinct binding sites with different affinities exist for both ions on each monomer. Physiological concentrations of potassium ion antagonize the binding of both divalent cations, especially affecting high-affinity calcium-binding sites. Acts as a neurotrophic factor that promotes astrocytosis and axonal proliferation. Involved in innervation of thermogenic adipose tissue by acting as an adipocyte-derived neurotrophic factor that promotes sympathetic innervation of adipose tissue. Binds to and initiates the activation of STK38 by releasing autoinhibitory intramolecular interactions within the kinase. Interaction with AGER after myocardial infarction may play a role in myocyte apoptosis by activating ERK1/2 and p53/TP53 signaling. Could assist ATAD3A cytoplasmic processing, preventing aggregation and favoring mitochondrial localization. May mediate calcium-dependent regulation on many physiological processes by interacting with other proteins, such as TPR-containing proteins, and modulating their activity. In Mus musculus (Mouse), this protein is Protein S100-B.